Consider the following 338-residue polypeptide: RNA 3'-terminal phosphate cyclase (338 aa).

Residues Q103 and 283 to 287 each bind ATP; that span reads YLADQ. H308 (tele-AMP-histidine intermediate) is an active-site residue.

Belongs to the RNA 3'-terminal cyclase family. Type 1 subfamily.

The protein resides in the cytoplasm. The catalysed reaction is a 3'-end 3'-phospho-ribonucleotide-RNA + ATP = a 3'-end 2',3'-cyclophospho-ribonucleotide-RNA + AMP + diphosphate. Its function is as follows. Catalyzes the conversion of 3'-phosphate to a 2',3'-cyclic phosphodiester at the end of RNA. The mechanism of action of the enzyme occurs in 3 steps: (A) adenylation of the enzyme by ATP; (B) transfer of adenylate to an RNA-N3'P to produce RNA-N3'PP5'A; (C) and attack of the adjacent 2'-hydroxyl on the 3'-phosphorus in the diester linkage to produce the cyclic end product. The biological role of this enzyme is unknown but it is likely to function in some aspects of cellular RNA processing. The protein is RNA 3'-terminal phosphate cyclase of Escherichia coli (strain K12 / MC4100 / BW2952).